Consider the following 309-residue polypeptide: Zinc transporter ZIP2 (309 aa).

Residues 1 to 8 (MEQLLGIK) are Extracellular-facing. Residues 9–29 (LGCLFALLALTLGCGLTPICF) form a helical membrane-spanning segment. The Cytoplasmic segment spans residues 30 to 46 (KWFQIDAARGHHRLVLR). Residues 47 to 67 (LLGCISAGVFLGAGFMHMTAE) form a helical membrane-spanning segment. Residues 68–103 (ALEEIESQIQKFMVQNRSASERNSSGDADSAHMEYP) are Extracellular-facing. Residues 104 to 124 (YGELIISLGFFFVFFLESLAL) form a helical membrane-spanning segment. Residues 125–164 (QCCPGAAGGSTVQDEEWGGAHIFELHSHGHLPSPSKGPLR) are Cytoplasmic-facing. The chain crosses the membrane as a helical span at residues 165-185 (ALVLLLSLSFHSVFEGLAVGL). Zn(2+) contacts are provided by His-175 and Glu-179. Residues 186-189 (QPTV) lie on the Extracellular side of the membrane. Residues 190–210 (AATVQLCLAVLAHKGLVVFGV) form a helical membrane-spanning segment. Residue His-202 coordinates Zn(2+). Residues 211–224 (GMRLVHLGTSSRWA) are Cytoplasmic-facing. A helical membrane pass occupies residues 225–245 (VFSILLLALMSPLGLAVGLAV). The Extracellular portion of the chain corresponds to 246-258 (TGGDSEGGRGLAQ). The helical transmembrane segment at 259-279 (AVLEGVAAGTFLYVTFLEILP) threads the bilayer. Residue Glu-276 participates in Zn(2+) binding. Residues 280-288 (RELASPEAP) lie on the Cytoplasmic side of the membrane. Residues 289 to 309 (LAKWSCVAAGFAFMAFIALWA) form a helical membrane-spanning segment.

This sequence belongs to the ZIP transporter (TC 2.A.5) family. In terms of tissue distribution, expressed only in prostate and uterine epithelial cells.

Its subcellular location is the cell membrane. The enzyme catalyses Zn(2+)(in) = Zn(2+)(out). It catalyses the reaction Cd(2+)(in) = Cd(2+)(out). Activity is increased at acidic pH (6.5). Inhibited in the presence of high extracellular K(+). Transporter for the divalent cation Zn(2+). Mediates the influx of Zn(2+) into cells from extracellular space. The Zn(2+) uniporter activity is independent of H(+)-driving force, but is modulated by extracellular pH and membrane potential. Also transports other divalent cations Zn(2+), Cd2(+), Cu2(+), Co2(+) in the order of decreasing affinity, respectively. In the skin, aids in the differentiation of keratinocytes in the epidermis. The protein is Zinc transporter ZIP2 of Homo sapiens (Human).